Consider the following 1288-residue polypeptide: 5-oxoprolinase (1288 aa).

A Phosphothreonine modification is found at Thr151. Residues 1248–1272 (PGGGGYGDPEDPAPPPGSPPQALAF) are disordered. Ser1265 carries the post-translational modification Phosphoserine.

The protein belongs to the oxoprolinase family. As to quaternary structure, homodimer.

The protein resides in the cytoplasm. It is found in the cytosol. It carries out the reaction 5-oxo-L-proline + ATP + 2 H2O = L-glutamate + ADP + phosphate + H(+). In terms of biological role, catalyzes the cleavage of 5-oxo-L-proline to form L-glutamate coupled to the hydrolysis of ATP to ADP and inorganic phosphate. The protein is 5-oxoprolinase of Homo sapiens (Human).